The chain runs to 465 residues: 23S rRNA (uracil(1939)-C(5))-methyltransferase RlmD (465 aa).

The interval 1–22 (MSEAVPTSARKSKNAPVAPGPA) is disordered. One can recognise a TRAM domain in the interval 16–80 (PVAPGPAPVL…PSYEQATVVD (65 aa)). Residues Cys-93, Cys-99, Cys-102, and Cys-181 each coordinate [4Fe-4S] cluster. Residues Gln-289, Phe-318, Asn-323, Glu-339, Asn-367, and Asp-388 each coordinate S-adenosyl-L-methionine. The active-site Nucleophile is the Cys-421.

It belongs to the class I-like SAM-binding methyltransferase superfamily. RNA M5U methyltransferase family. RlmD subfamily.

The enzyme catalyses uridine(1939) in 23S rRNA + S-adenosyl-L-methionine = 5-methyluridine(1939) in 23S rRNA + S-adenosyl-L-homocysteine + H(+). Catalyzes the formation of 5-methyl-uridine at position 1939 (m5U1939) in 23S rRNA. The polypeptide is 23S rRNA (uracil(1939)-C(5))-methyltransferase RlmD (Burkholderia cenocepacia (strain HI2424)).